A 344-amino-acid polypeptide reads, in one-letter code: RNA 3'-terminal phosphate cyclase (344 aa).

Residues glutamine 102 and 284-288 (FLGDQ) contribute to the ATP site. Catalysis depends on histidine 308, which acts as the Tele-AMP-histidine intermediate.

This sequence belongs to the RNA 3'-terminal cyclase family. Type 1 subfamily.

It localises to the cytoplasm. It catalyses the reaction a 3'-end 3'-phospho-ribonucleotide-RNA + ATP = a 3'-end 2',3'-cyclophospho-ribonucleotide-RNA + AMP + diphosphate. Its function is as follows. Catalyzes the conversion of 3'-phosphate to a 2',3'-cyclic phosphodiester at the end of RNA. The mechanism of action of the enzyme occurs in 3 steps: (A) adenylation of the enzyme by ATP; (B) transfer of adenylate to an RNA-N3'P to produce RNA-N3'PP5'A; (C) and attack of the adjacent 2'-hydroxyl on the 3'-phosphorus in the diester linkage to produce the cyclic end product. The biological role of this enzyme is unknown but it is likely to function in some aspects of cellular RNA processing. The chain is RNA 3'-terminal phosphate cyclase from Thermococcus gammatolerans (strain DSM 15229 / JCM 11827 / EJ3).